Reading from the N-terminus, the 1930-residue chain is Transport and Golgi organization protein 1 homolog (1930 aa).

An N-terminal signal peptide occupies residues 1 to 24; that stretch reads MAAAPGLLFWLFVLGALWWVPGQS. The Lumenal segment spans residues 25–1171; that stretch reads DLSHGRRFSD…EPAAVPPLES (1147 aa). Residues 45 to 107 enclose the SH3 domain; sequence MLMYRGKALE…PKDLIKVLHK (63 aa). Disordered regions lie at residues 144 to 263, 317 to 496, 547 to 737, 754 to 891, and 1018 to 1149; these read LELE…REKT, EEEE…AAEK, LGSS…MNSQ, TKQP…TPEI, and TAPL…PVGA. Residues 152 to 189 show a composition bias toward basic and acidic residues; sequence EESKKAEEVSQHREKSPEESRGRELDPVPEPEAFRADS. A compositionally biased stretch (polar residues) spans 197–211; that stretch reads SESTEGLQGQPSAQE. A Phosphoserine modification is found at serine 229. Over residues 247 to 256 the composition is skewed to polar residues; sequence ESRTGNSSPA. The span at 317-330 shows a compositional bias: acidic residues; that stretch reads EEEEEVEEDADSSD. Basic and acidic residues predominate over residues 338 to 368; the sequence is SDKDEKVPGKPMIEKYLTDKDPNLSEEDKVE. A glycan (N-linked (GlcNAc...) asparagine) is linked at asparagine 360. Residues 420 to 430 are compositionally biased toward acidic residues; it reads DSEDEGDDLFV. Composition is skewed to basic and acidic residues over residues 431–442 and 451–461; these read EEPKTNDVKDSE and GEEKDIQESRK. Asparagine 631 is a glycosylation site (N-linked (GlcNAc...) asparagine). Positions 661 to 677 are enriched in basic and acidic residues; sequence EDGTDAEQARAIRRPQE. A compositionally biased stretch (acidic residues) spans 692 to 701; that stretch reads DEEEEEEEGD. The segment covering 715-726 has biased composition (polar residues); it reads VSAQQSRENSPS. A compositionally biased stretch (basic and acidic residues) spans 791-800; that stretch reads EESHLADMRA. Serine 856 bears the Phosphoserine mark. A compositionally biased stretch (basic and acidic residues) spans 1030–1039; the sequence is GWARPGEERQ. 2 stretches are compositionally biased toward polar residues: residues 1040–1054 and 1115–1127; these read PPQQ…TGDL and QPVT…SEVS. Residues 1128 to 1137 are compositionally biased toward basic and acidic residues; sequence QKPDTKKDID. The stretch at 1172–1192 is an intramembrane region; sequence AFGSLYAFILYLSKMLLATLP. The Lumenal segment spans residues 1193-1202; it reads DNVQPGPDFY. Residues 1203-1223 form a helical membrane-spanning segment; it reads GLPWQPVIITAVLGIVSFAIF. Residues 1224–1930 are Cytoplasmic-facing; it reads SWRTILVVKS…DRSQASKPTP (707 aa). 2 coiled-coil regions span residues 1236-1329 and 1359-1422; these read YQVT…KNQD and LNEA…EIAL. A mediates interaction with MIA2 region spans residues 1238-1677; it reads VTEKQISEKL…VIVKPMPGRP (440 aa). Positions 1447–1472 are disordered; the sequence is ESEDPDKGGNESDDLANGETGGDRSE. Serine 1458 carries the post-translational modification Phosphoserine. Positions 1514 to 1662 form a coiled coil; sequence NLEDQIKKLE…LLEMTQKMAM (149 aa). Disordered stretches follow at residues 1669 to 1796, 1801 to 1820, and 1840 to 1930; these read IVKP…VPLM, PPPI…FGPR, and APGV…KPTP. Positions 1677 to 1694 are enriched in polar residues; the sequence is PNTQNPPRRGLLSQNGSF. Phosphoserine is present on residues serine 1693 and serine 1705. The span at 1706–1715 shows a compositional bias: pro residues; sequence PPLPAEPPGR. Residues 1722 to 1738 are compositionally biased toward basic and acidic residues; it reads SRRDTPRSEFGSLDRHL. A phosphoserine mark is found at serine 1733, serine 1754, serine 1766, and serine 1770. Positions 1760 to 1773 are enriched in low complexity; that stretch reads PVVNSSSRSSSPAK. Residues 1776–1930 are proline-rich domain (PRD); mediates interaction with the COPII coat subunits SEC23A and SEC23B; sequence DEGKVNMAPK…DRSQASKPTP (155 aa). Positions 1801 to 1811 are enriched in pro residues; that stretch reads PPPIRYGPPPQ. At arginine 1805 the chain carries Asymmetric dimethylarginine. Residues 1809–1869 are SEC16A-interacting region (SIR); required for its localization to endoplasmic reticulum exit sites and for its interaction with SEC16A; that stretch reads PPQLCGGPFG…GHTPFRPPGS (61 aa). Over residues 1846–1858 the composition is skewed to basic and acidic residues; the sequence is GKRDLPLDPREFL. The segment covering 1881-1898 has biased composition (pro residues); that stretch reads RLPPPTHGPQEYPPPPPA. Serine 1915 is modified (phosphoserine). A compositionally biased stretch (polar residues) spans 1915–1930; sequence SPSSVQDRSQASKPTP.

Belongs to the MIA/OTOR family. Tango1 subfamily. Interacts with MIA2. Interacts (via SH3 domain) with COL7A1. Interacts with the COPII coat subunits SEC23A, SEC23B and maybe SEC24C. May interact with APOB and MIA2. Interacts with SEC16A.

The protein localises to the endoplasmic reticulum membrane. In terms of biological role, plays a role in the transport of cargos that are too large to fit into COPII-coated vesicles and require specific mechanisms to be incorporated into membrane-bound carriers and exported from the endoplasmic reticulum. This protein is required for collagen VII (COL7A1) secretion by loading COL7A1 into transport carriers. It may participate in cargo loading of COL7A1 at endoplasmic reticulum exit sites by binding to COPII coat subunits Sec23/24 and guiding SH3-bound COL7A1 into a growing carrier. Does not play a role in global protein secretion and is apparently specific to COL7A1 cargo loading. However, it may participate in secretion of other proteins in cells that do not secrete COL7A1. It is also specifically required for the secretion of lipoproteins by participating in their export from the endoplasmic reticulum. Required for correct assembly of COPII coat components at endoplasmic reticulum exit sites (ERES) and for the localization of SEC16A and membrane-bound ER-resident complexes consisting of MIA2 and PREB/SEC12 to ERES. In Mus musculus (Mouse), this protein is Transport and Golgi organization protein 1 homolog.